The primary structure comprises 176 residues: Peptide methionine sulfoxide reductase MsrA (176 aa).

Cys-10 is a catalytic residue.

The protein belongs to the MsrA Met sulfoxide reductase family.

The enzyme catalyses L-methionyl-[protein] + [thioredoxin]-disulfide + H2O = L-methionyl-(S)-S-oxide-[protein] + [thioredoxin]-dithiol. The catalysed reaction is [thioredoxin]-disulfide + L-methionine + H2O = L-methionine (S)-S-oxide + [thioredoxin]-dithiol. In terms of biological role, has an important function as a repair enzyme for proteins that have been inactivated by oxidation. Catalyzes the reversible oxidation-reduction of methionine sulfoxide in proteins to methionine. The polypeptide is Peptide methionine sulfoxide reductase MsrA (Chromobacterium violaceum (strain ATCC 12472 / DSM 30191 / JCM 1249 / CCUG 213 / NBRC 12614 / NCIMB 9131 / NCTC 9757 / MK)).